Here is a 187-residue protein sequence, read N- to C-terminus: Lipid A acyltransferase PagP (187 aa).

An N-terminal signal peptide occupies residues 1–26; it reads MIVAKKYFLVLSFLFVQFALLPQAFS. Active-site residues include histidine 59, aspartate 102, and serine 103.

The protein belongs to the lipid A palmitoyltransferase family. In terms of assembly, homodimer.

It localises to the cell outer membrane. The enzyme catalyses a lipid A + a 1,2-diacyl-sn-glycero-3-phosphocholine = a hepta-acyl lipid A + a 2-acyl-sn-glycero-3-phosphocholine. The catalysed reaction is a lipid IVA + a 1,2-diacyl-sn-glycero-3-phosphocholine = a lipid IVB + a 2-acyl-sn-glycero-3-phosphocholine. It carries out the reaction a lipid IIA + a 1,2-diacyl-sn-glycero-3-phosphocholine = a lipid IIB + a 2-acyl-sn-glycero-3-phosphocholine. Transfers a fatty acid residue from the sn-1 position of a phospholipid to the N-linked hydroxyfatty acid chain on the proximal unit of lipid A or its precursors. This is Lipid A acyltransferase PagP from Citrobacter koseri (strain ATCC BAA-895 / CDC 4225-83 / SGSC4696).